Reading from the N-terminus, the 421-residue chain is UPF0229 protein lpl2726 (421 aa).

The interval 83–110 (IAGDRIKRPGGGGSGGAGGNASDSGEGE) is disordered. Gly residues predominate over residues 91–101 (PGGGGSGGAGG).

It belongs to the UPF0229 family.

This chain is UPF0229 protein lpl2726, found in Legionella pneumophila (strain Lens).